A 287-amino-acid polypeptide reads, in one-letter code: 4-hydroxybenzoate octaprenyltransferase (287 aa).

9 helical membrane-spanning segments follow: residues 19–39 (PIGTLLLLWPTLWALWLASSG), 43–63 (LQMLMIFIAGTFLMRSAGCAI), 94–114 (VVVAGVLALIAFLLIQPLNIF), 118–138 (LSVLALLVAFIYPFTKRFLAI), 142–162 (VLGIAFGFGIPMAYAAVLDFI), 167–187 (WVLFVGNIFWAIAYDTAYAMV), 209–229 (VLAIAFSYGVLFVSQLWVAHL), 235–255 (YFLIGWGAALGCAIYQLKLVS), and 263–283 (FLAFRHNNWLGGFLFLGIVLG).

It belongs to the UbiA prenyltransferase family. Requires Mg(2+) as cofactor.

It is found in the cell inner membrane. The catalysed reaction is all-trans-octaprenyl diphosphate + 4-hydroxybenzoate = 4-hydroxy-3-(all-trans-octaprenyl)benzoate + diphosphate. Its pathway is cofactor biosynthesis; ubiquinone biosynthesis. Functionally, catalyzes the prenylation of para-hydroxybenzoate (PHB) with an all-trans polyprenyl group. Mediates the second step in the final reaction sequence of ubiquinone-8 (UQ-8) biosynthesis, which is the condensation of the polyisoprenoid side chain with PHB, generating the first membrane-bound Q intermediate 3-octaprenyl-4-hydroxybenzoate. This is 4-hydroxybenzoate octaprenyltransferase from Polynucleobacter asymbioticus (strain DSM 18221 / CIP 109841 / QLW-P1DMWA-1) (Polynucleobacter necessarius subsp. asymbioticus).